The chain runs to 210 residues: Ribosomal RNA large subunit methyltransferase E (210 aa).

S-adenosyl-L-methionine is bound by residues Gly64, Trp66, Asp84, Asp100, and Asp125. Lys165 acts as the Proton acceptor in catalysis.

The protein belongs to the class I-like SAM-binding methyltransferase superfamily. RNA methyltransferase RlmE family.

It localises to the cytoplasm. The enzyme catalyses uridine(2552) in 23S rRNA + S-adenosyl-L-methionine = 2'-O-methyluridine(2552) in 23S rRNA + S-adenosyl-L-homocysteine + H(+). In terms of biological role, specifically methylates the uridine in position 2552 of 23S rRNA at the 2'-O position of the ribose in the fully assembled 50S ribosomal subunit. This Chromohalobacter salexigens (strain ATCC BAA-138 / DSM 3043 / CIP 106854 / NCIMB 13768 / 1H11) protein is Ribosomal RNA large subunit methyltransferase E.